Consider the following 338-residue polypeptide: DNA-directed RNA polymerase subunit alpha (338 aa).

The tract at residues 1–234 (MIQKNWQELI…DQLNVFVNFE (234 aa)) is alpha N-terminal domain (alpha-NTD). Residues 250–338 (FNPALLKKVD…ELAKRFEEHY (89 aa)) form an alpha C-terminal domain (alpha-CTD) region.

This sequence belongs to the RNA polymerase alpha chain family. Homodimer. The RNAP catalytic core consists of 2 alpha, 1 beta, 1 beta' and 1 omega subunit. When a sigma factor is associated with the core the holoenzyme is formed, which can initiate transcription.

It carries out the reaction RNA(n) + a ribonucleoside 5'-triphosphate = RNA(n+1) + diphosphate. Functionally, DNA-dependent RNA polymerase catalyzes the transcription of DNA into RNA using the four ribonucleoside triphosphates as substrates. This Beijerinckia indica subsp. indica (strain ATCC 9039 / DSM 1715 / NCIMB 8712) protein is DNA-directed RNA polymerase subunit alpha.